A 316-amino-acid chain; its full sequence is Pantothenate kinase (316 aa).

Glycine 95–serine 102 serves as a coordination point for ATP.

It belongs to the prokaryotic pantothenate kinase family.

Its subcellular location is the cytoplasm. The catalysed reaction is (R)-pantothenate + ATP = (R)-4'-phosphopantothenate + ADP + H(+). The protein operates within cofactor biosynthesis; coenzyme A biosynthesis; CoA from (R)-pantothenate: step 1/5. The polypeptide is Pantothenate kinase (Salmonella choleraesuis (strain SC-B67)).